The chain runs to 90 residues: Acylphosphatase (90 aa).

The region spanning 5 to 90 (SYLFNVKGKV…WQELTDFKMY (86 aa)) is the Acylphosphatase-like domain. Active-site residues include Arg-20 and Asn-38.

This sequence belongs to the acylphosphatase family.

It carries out the reaction an acyl phosphate + H2O = a carboxylate + phosphate + H(+). This is Acylphosphatase (acyP) from Aliivibrio fischeri (strain ATCC 700601 / ES114) (Vibrio fischeri).